Consider the following 356-residue polypeptide: TPR repeat-containing protein P27G11.02 (356 aa).

A mitochondrion-targeting transit peptide spans 1–20 (MRMQWIWKSRRSLQNVFIRR). TPR repeat units lie at residues 194-227 (SRLF…TMAN) and 290-323 (AAAF…RKDD).

The protein localises to the mitochondrion. The polypeptide is TPR repeat-containing protein P27G11.02 (Schizosaccharomyces pombe (strain 972 / ATCC 24843) (Fission yeast)).